The sequence spans 99 residues: A-type ATP synthase subunit F (99 aa).

Belongs to the V-ATPase F subunit family. As to quaternary structure, has multiple subunits with at least A(3), B(3), C, D, E, F, H, I and proteolipid K(x).

It localises to the cell membrane. Its function is as follows. Component of the A-type ATP synthase that produces ATP from ADP in the presence of a proton gradient across the membrane. This Methanococcus maripaludis (strain C6 / ATCC BAA-1332) protein is A-type ATP synthase subunit F.